Here is a 257-residue protein sequence, read N- to C-terminus: Zinc transporter ZupT (257 aa).

The next 8 helical transmembrane spans lie at 5-25 (LILTLLAGAATFIGAILGVIG), 32-52 (VLAFSLGFAAGIMLLISLMEM), 61-81 (GMSPVMGYGMFVVGLLGYFAL), 109-129 (AILLTLGISLHNFPEGVATYV), 137-157 (LGFGIALAVALHNIPEGLAVA), 171-191 (ILWAGISGLAEILGGVLTWLI), 195-215 (MISPVVMAAIMAAVAGIMVAL), and 236-256 (GVLCGMSVMGLSLVLLQTAGF). The Fe(2+) site is built by asparagine 120 and glutamate 123. 2 residues coordinate Zn(2+): glutamate 123 and histidine 148. 3 residues coordinate Fe(2+): asparagine 149, glutamate 152, and glutamate 181. Position 152 (glutamate 152) interacts with Zn(2+).

This sequence belongs to the ZIP transporter (TC 2.A.5) family. ZupT subfamily.

It localises to the cell inner membrane. The enzyme catalyses Zn(2+)(in) = Zn(2+)(out). Its function is as follows. Mediates zinc uptake. May also transport other divalent cations. The polypeptide is Zinc transporter ZupT (Enterobacter sp. (strain 638)).